We begin with the raw amino-acid sequence, 432 residues long: Putative cyclin-F1-4 (432 aa).

Belongs to the cyclin family. Cyclin F subfamily.

This chain is Putative cyclin-F1-4 (CycF1-4), found in Oryza sativa subsp. japonica (Rice).